We begin with the raw amino-acid sequence, 520 residues long: Putative lipase ATG15 (520 aa).

Topologically, residues 1–14 (MLHKSPSRKRFASP) are cytoplasmic. Residues 15–35 (LHLGCILTLTVLCLIAYYFAL) form a helical; Signal-anchor for type II membrane protein membrane-spanning segment. Residues 36 to 520 (PDYLSVGKSS…WLGFCTKYEL (485 aa)) lie on the Lumenal side of the membrane. Residues Asn173, Asn202, and Asn208 are each glycosylated (N-linked (GlcNAc...) asparagine). The Charge relay system role is filled by Ser332.

This sequence belongs to the AB hydrolase superfamily. Lipase family. In terms of assembly, binds to both phosphatidylinositol (PI) and phosphatidylinositol 3,5-bisphosphate (PIP2).

It is found in the endosome. The protein localises to the multivesicular body membrane. It localises to the prevacuolar compartment membrane. It catalyses the reaction a triacylglycerol + H2O = a diacylglycerol + a fatty acid + H(+). In terms of biological role, lipase which is essential for lysis of subvacuolar cytoplasm to vacuole targeted bodies and intravacuolar autophagic bodies. Involved in the lysis of intravacuolar multivesicular body (MVB) vesicles. The intravacuolar membrane disintegration by ATG15 is critical to life span extension. The polypeptide is Putative lipase ATG15 (ATG15) (Saccharomyces cerevisiae (strain YJM789) (Baker's yeast)).